Here is a 340-residue protein sequence, read N- to C-terminus: Phosphoribosylformylglycinamidine cyclo-ligase (340 aa).

It belongs to the AIR synthase family.

It is found in the cytoplasm. It catalyses the reaction 2-formamido-N(1)-(5-O-phospho-beta-D-ribosyl)acetamidine + ATP = 5-amino-1-(5-phospho-beta-D-ribosyl)imidazole + ADP + phosphate + H(+). It participates in purine metabolism; IMP biosynthesis via de novo pathway; 5-amino-1-(5-phospho-D-ribosyl)imidazole from N(2)-formyl-N(1)-(5-phospho-D-ribosyl)glycinamide: step 2/2. In Streptococcus agalactiae serotype III (strain NEM316), this protein is Phosphoribosylformylglycinamidine cyclo-ligase.